Here is a 511-residue protein sequence, read N- to C-terminus: MKKADILVLDFGSQYTQLIARRLREQGVYAEILPFNVSLADIKAKEPKGIILSGGPASVYATDAYFCDKGIFDLGLPVLGICYGMQLMAHHYKATVAPAGHKEYGKANIEVKKDSALFKNLPKKQTVWMSHSDKVENLSQGFEVLATSENSPFCVFGNEDKKFFALQFHPEVQHSEFGKNILKNFAKYACNCESVWNMGSFAKTQAEKIREEVGNDKVLCAVSGGVDSSVVAALLASAIKEQVIVVFVDNGLLRSGEKEQVEFMFKNTLGIDLISIDASEIFLSRLANVRDPEQKRKIIGNTFIEIFEEEAKKHKDVKYLAQGTLYTDIIESSVVGASKTIKSHHNVGGLPEKINLKLIEPLKEIFKDEVRALGLELGLSKEVVYRHPFPGPGLAIRIMGEVNRPSLELLRKADVILLEELKSTGWYDKTWQAFCVLLNVKSVGVMGDNRTYDNAVCIRVVDASDGMTATFSHLPYEVLENISRRIINEVEGINRVVYDISSKPPATIEWE.

One can recognise a Glutamine amidotransferase type-1 domain in the interval aspartate 5–valine 195. Cysteine 82 (nucleophile) is an active-site residue. Catalysis depends on residues histidine 169 and glutamate 171. The region spanning tryptophan 196–arginine 386 is the GMPS ATP-PPase domain. Serine 223 to serine 229 contacts ATP.

As to quaternary structure, homodimer.

It catalyses the reaction XMP + L-glutamine + ATP + H2O = GMP + L-glutamate + AMP + diphosphate + 2 H(+). It participates in purine metabolism; GMP biosynthesis; GMP from XMP (L-Gln route): step 1/1. Functionally, catalyzes the synthesis of GMP from XMP. This chain is GMP synthase [glutamine-hydrolyzing], found in Campylobacter jejuni subsp. doylei (strain ATCC BAA-1458 / RM4099 / 269.97).